The chain runs to 329 residues: uncharacterized protein (329 aa).

10 helical membrane-spanning segments follow: residues 9–29 (LMGL…NVIV), 53–73 (SHSF…MALI), 105–125 (FLMF…PTGI), 126–146 (AITL…RLFN), 154–174 (WLVI…AYGG), 179–199 (LVLG…YTVF), 210–230 (VPFT…CLII), 240–260 (WLAI…GHVL), 273–293 (AAII…LAIQ), and 296–316 (LTNI…LLNY). EamA domains are found at residues 103–169 (CGFL…LTIP) and 191–316 (IVYA…LLNY).

This sequence belongs to the EamA transporter family.

The protein resides in the cell membrane. This is an uncharacterized protein from Synechocystis sp. (strain ATCC 27184 / PCC 6803 / Kazusa).